An 87-amino-acid chain; its full sequence is Small ribosomal subunit protein bS20 (87 aa).

The disordered stretch occupies residues 1-28 (MANIKSQQKRNRTNERARLRNKSVKSSL).

The protein belongs to the bacterial ribosomal protein bS20 family.

In terms of biological role, binds directly to 16S ribosomal RNA. This is Small ribosomal subunit protein bS20 from Mycobacterium marinum (strain ATCC BAA-535 / M).